The following is a 125-amino-acid chain: Protein ApaG (125 aa).

The region spanning 1-125 (MIDSPRVCVQ…FRLAVPTFIH (125 aa)) is the ApaG domain.

The chain is Protein ApaG from Enterobacter sp. (strain 638).